The sequence spans 363 residues: tRNA N6-adenosine threonylcarbamoyltransferase (363 aa).

Positions 121 and 125 each coordinate Fe cation. Residues 143 to 147 (LASGG), D176, G189, and N287 each bind substrate. D315 serves as a coordination point for Fe cation.

Belongs to the KAE1 / TsaD family. Fe(2+) serves as cofactor.

It localises to the cytoplasm. It carries out the reaction L-threonylcarbamoyladenylate + adenosine(37) in tRNA = N(6)-L-threonylcarbamoyladenosine(37) in tRNA + AMP + H(+). In terms of biological role, required for the formation of a threonylcarbamoyl group on adenosine at position 37 (t(6)A37) in tRNAs that read codons beginning with adenine. Is involved in the transfer of the threonylcarbamoyl moiety of threonylcarbamoyl-AMP (TC-AMP) to the N6 group of A37, together with TsaE and TsaB. TsaD likely plays a direct catalytic role in this reaction. In Rhodopseudomonas palustris (strain BisA53), this protein is tRNA N6-adenosine threonylcarbamoyltransferase.